The following is a 255-amino-acid chain: MAEEHKHEESIMEKISEKIHGHDDSSSSSSDSDDDKNSASLKTKIYRLFGREQPLHKLFGGGKPADIFLWRNKKVSGGVLGAATVSWILFELLEYNLLTLFGHISILALAVLFLWSSASTFIHKSPLHIPEVHIPEDVVLQLASGLRIEINRGFTVLRDIASGRDLKKFLLVIAGLWVLSKVGSSCNFLTLIYIATVLLFTIPVLYEKYEDKVDDFGEKAMREIKKQYVEFDVKVLSKVMSKIPKGAFAFIKKKD.

A compositionally biased stretch (basic and acidic residues) spans 1 to 25 (MAEEHKHEESIMEKISEKIHGHDDS). Residues 1-38 (MAEEHKHEESIMEKISEKIHGHDDSSSSSSDSDDDKNS) are disordered. Position 2 is an N-acetylalanine (A2). The Reticulon domain occupies 64–255 (PADIFLWRNK…GAFAFIKKKD (192 aa)). 3 helical membrane-spanning segments follow: residues 75–95 (VSGG…LLEY), 97–117 (LLTL…LWSS), and 186–206 (CNFL…PVLY).

The protein resides in the endoplasmic reticulum membrane. Its subcellular location is the vacuole membrane. In Arabidopsis thaliana (Mouse-ear cress), this protein is Reticulon-like protein B3 (RTNLB3).